The primary structure comprises 394 residues: Putative agmatinase 1 (394 aa).

The first 20 residues, 1–20 (MALQSLFLILLAGAAQLAQA), serve as a signal peptide directing secretion. Mn(2+) contacts are provided by His-186, Asp-209, His-211, Asp-213, Asp-307, and Asp-309.

The protein belongs to the arginase family. Requires Mn(2+) as cofactor.

It catalyses the reaction agmatine + H2O = urea + putrescine. This Schizosaccharomyces pombe (strain 972 / ATCC 24843) (Fission yeast) protein is Putative agmatinase 1.